The sequence spans 1537 residues: DNA-directed RNA polymerase subunit beta' (1537 aa).

Zn(2+) contacts are provided by Cys57, Cys59, Cys72, and Cys75. The Mg(2+) site is built by Asp746, Asp748, and Asp750. The Zn(2+) site is built by Cys1120, Cys1201, Cys1208, and Cys1211. The tract at residues 1502-1537 (LEKYGQTSVSTDAVTGSQRYDDTRPSSTSINPSYGD) is disordered. 2 stretches are compositionally biased toward polar residues: residues 1506 to 1519 (GQTSVSTDAVTGSQ) and 1526 to 1537 (PSSTSINPSYGD).

It belongs to the RNA polymerase beta' chain family. As to quaternary structure, the RNAP catalytic core consists of 2 alpha, 1 beta, 1 beta' and 1 omega subunit. When a sigma factor is associated with the core the holoenzyme is formed, which can initiate transcription. Mg(2+) serves as cofactor. The cofactor is Zn(2+).

It carries out the reaction RNA(n) + a ribonucleoside 5'-triphosphate = RNA(n+1) + diphosphate. Its function is as follows. DNA-dependent RNA polymerase catalyzes the transcription of DNA into RNA using the four ribonucleoside triphosphates as substrates. In Deinococcus geothermalis (strain DSM 11300 / CIP 105573 / AG-3a), this protein is DNA-directed RNA polymerase subunit beta'.